The following is a 365-amino-acid chain: Flagellin 1 (365 aa).

Belongs to the bacterial flagellin family.

It localises to the secreted. Its subcellular location is the bacterial flagellum. Functionally, flagellin is the subunit protein which polymerizes to form the filaments of bacterial flagella. This chain is Flagellin 1 (fliC1), found in Proteus mirabilis.